We begin with the raw amino-acid sequence, 211 residues long: tRNA (guanine-N(7)-)-methyltransferase (211 aa).

Residues Glu-43, Glu-68, Asp-95, and Asp-117 each contribute to the S-adenosyl-L-methionine site. Residue Asp-117 is part of the active site. Residues Lys-121, Asp-153, and 190 to 193 each bind substrate; that span reads TEYE.

Belongs to the class I-like SAM-binding methyltransferase superfamily. TrmB family.

It catalyses the reaction guanosine(46) in tRNA + S-adenosyl-L-methionine = N(7)-methylguanosine(46) in tRNA + S-adenosyl-L-homocysteine. The protein operates within tRNA modification; N(7)-methylguanine-tRNA biosynthesis. In terms of biological role, catalyzes the formation of N(7)-methylguanine at position 46 (m7G46) in tRNA. In Staphylococcus carnosus (strain TM300), this protein is tRNA (guanine-N(7)-)-methyltransferase.